The primary structure comprises 60 residues: Large ribosomal subunit protein bL33 (60 aa).

The protein belongs to the bacterial ribosomal protein bL33 family.

This Chlorobaculum tepidum (strain ATCC 49652 / DSM 12025 / NBRC 103806 / TLS) (Chlorobium tepidum) protein is Large ribosomal subunit protein bL33.